Consider the following 272-residue polypeptide: Large ribosomal subunit protein uL2cz/uL2cy (272 aa).

Polar residues predominate over residues 1 to 13; sequence MHLYKTSTPSTRN. Disordered stretches follow at residues 1–27 and 222–272; these read MHLY…PRNN and NPVD…RRSK.

This sequence belongs to the universal ribosomal protein uL2 family. In terms of assembly, part of the 50S ribosomal subunit.

It localises to the plastid. The protein resides in the chloroplast. The sequence is that of Large ribosomal subunit protein uL2cz/uL2cy (rpl2-A) from Buxus microphylla (Littleleaf boxwood).